The primary structure comprises 581 residues: Proline--tRNA ligase 1 (581 aa).

It belongs to the class-II aminoacyl-tRNA synthetase family. ProS type 1 subfamily. As to quaternary structure, homodimer.

It is found in the cytoplasm. The catalysed reaction is tRNA(Pro) + L-proline + ATP = L-prolyl-tRNA(Pro) + AMP + diphosphate. Functionally, catalyzes the attachment of proline to tRNA(Pro) in a two-step reaction: proline is first activated by ATP to form Pro-AMP and then transferred to the acceptor end of tRNA(Pro). As ProRS can inadvertently accommodate and process non-cognate amino acids such as alanine and cysteine, to avoid such errors it has two additional distinct editing activities against alanine. One activity is designated as 'pretransfer' editing and involves the tRNA(Pro)-independent hydrolysis of activated Ala-AMP. The other activity is designated 'posttransfer' editing and involves deacylation of mischarged Ala-tRNA(Pro). The misacylated Cys-tRNA(Pro) is not edited by ProRS. This Rhodococcus jostii (strain RHA1) protein is Proline--tRNA ligase 1.